The sequence spans 320 residues: Heterogeneous nuclear ribonucleoprotein A1 (320 aa).

Met-1 is modified (N-acetylmethionine). Residue Ser-2 is modified to N-acetylserine; in Heterogeneous nuclear ribonucleoprotein A1, N-terminally processed. The residue at position 2 (Ser-2) is a Phosphoserine. At Lys-3 the chain carries N6-acetyllysine; alternate. Lys-3 is covalently cross-linked (Glycyl lysine isopeptide (Lys-Gly) (interchain with G-Cter in SUMO2); alternate). Ser-4 and Ser-6 each carry phosphoserine. Positions 4-94 (SESPKEPEQL…EPKRAVSRED (91 aa)) are globular A domain. Residue Lys-8 forms a Glycyl lysine isopeptide (Lys-Gly) (interchain with G-Cter in SUMO2) linkage. 2 RRM domains span residues 14–97 (RKLF…DSQR) and 105–184 (KKIF…LSKQ). The residue at position 22 (Ser-22) is a Phosphoserine. Residue Lys-78 forms a Glycyl lysine isopeptide (Lys-Gly) (interchain with G-Cter in SUMO2) linkage. Residues 95–185 (SQRPGAHLTV…EVRKALSKQE (91 aa)) form a globular B domain region. Lys-113 participates in a covalent cross-link: Glycyl lysine isopeptide (Lys-Gly) (interchain with G-Cter in SUMO). Glycyl lysine isopeptide (Lys-Gly) (interchain with G-Cter in SUMO2) cross-links involve residues Lys-179 and Lys-183. The segment at 182–216 (SKQEMASASSSQRGRSGSGNFGGGRGGGFGGNDNF) is disordered. At Ser-192 the chain carries Phosphoserine; by MKNK2. Asymmetric dimethylarginine; alternate is present on Arg-194. At Arg-194 the chain carries Dimethylated arginine; alternate. Arg-194 bears the Omega-N-methylarginine; alternate mark. A compositionally biased stretch (gly residues) spans 197–216 (SGSGNFGGGRGGGFGGNDNF). A Phosphoserine modification is found at Ser-199. Asymmetric dimethylarginine; alternate occurs at positions 206, 218, 225, and 232. Arg-206 is modified (dimethylated arginine; alternate). 4 positions are modified to omega-N-methylarginine; alternate: Arg-206, Arg-218, Arg-225, and Arg-232. An RNA-binding RGG-box region spans residues 218–240 (RGGNFSGRGGFGGSRGGGGYGGS). Arg-225 is subject to Dimethylated arginine; alternate. The interval 268–305 (NQSSNFGPMKGGNFGGRSSGPYGGGGQYFAKPRNQGGY) is nuclear targeting sequence. Residues 274-320 (GPMKGGNFGGRSSGPYGGGGQYFAKPRNQGGYGGSSSSSSYGSGRRF) form a disordered region. The span at 276–294 (MKGGNFGGRSSGPYGGGGQ) shows a compositional bias: gly residues. Residue Arg-284 is modified to Omega-N-methylarginine. Ser-285 is modified (phosphoserine). Lys-298 carries the N6-acetyllysine; alternate modification. Lys-298 is covalently cross-linked (Glycyl lysine isopeptide (Lys-Gly) (interchain with G-Cter in SUMO2); alternate). The residue at position 300 (Arg-300) is an Omega-N-methylarginine. A compositionally biased stretch (low complexity) spans 308 to 320 (SSSSSSYGSGRRF). A Phosphoserine modification is found at Ser-309. Phosphoserine; by MKNK2 is present on residues Ser-310, Ser-311, and Ser-312. Phosphoserine occurs at positions 313 and 316. Arg-318 bears the Omega-N-methylarginine mark.

As to quaternary structure, identified in the spliceosome C complex. Identified in a IGF2BP1-dependent mRNP granule complex containing untranslated mRNAs. Interacts with SEPT6. Interacts with C9orf72. Interacts with KHDRBS1. Interacts with UBQLN2. Interacts with PPIA/CYPA. Post-translationally, sumoylated.

Its subcellular location is the nucleus. The protein resides in the cytoplasm. Involved in the packaging of pre-mRNA into hnRNP particles, transport of poly(A) mRNA from the nucleus to the cytoplasm and modulation of splice site selection. Plays a role in the splicing of pyruvate kinase PKM by binding repressively to sequences flanking PKM exon 9, inhibiting exon 9 inclusion and resulting in exon 10 inclusion and production of the PKM M2 isoform. Binds to the IRES and thereby inhibits the translation of the apoptosis protease activating factor APAF1. May bind to specific miRNA hairpins. The sequence is that of Heterogeneous nuclear ribonucleoprotein A1 (Hnrnpa1) from Mus musculus (Mouse).